A 666-amino-acid chain; its full sequence is MGTALVYHEDMTATRLLWDDPECEIECPERLTAALDGLRQRGLEERCLCLSACEASEEELGLVHSPEYIALVQKTQTLDKEELHALSKQYNAVYFHPDTFHCARLAAGAALQLVDAVLTGAVHNGLALVRPPGHHSQRAAANGFCVFNNVALAAKHAKQKYGLQRILIVDWDVHHGQGIQYIFNDDPSVLYFSWHRYEHGSFWPFLPESDADAVGQGQGQGFTVNLPWNQVGMGNADYLAAFLHVLLPLAFEFDPELVLVSAGFDSAIGDPEGQMQATPECFAHLTQLLQVLAGGRICAVLEGGYHLESLAQSVCMMVQTLLGDPTPPLLGLMVPCQSALESIQSVQTAQTPYWTSLQQNVAPVLSSSTHSPEERSLRLLGESPTCAVAEDSLSPLLDQLCLRPAPPICTAVASTVPGAALCLPPGVLHQEGSVLREETEAWARLHKSRFQDEDLATLGKILCLLDGIMDGQIRNAIATTTALATAATLDVLIQRCLARRAQRVLCVALGQLDRPLDLADDGRILWLNIRGKDAAIQSMFHFSTPLPQTTGGFLSLILGLVLPLAYGFQPDMVLMALGPAHGLQNAQAALLAAMLRSPVGGRILAVVEEESIRLLARSLAQALHGETPPSLGPFSKATPEEIQALMFLKARLEARWKLLQVAAPPP.

The interval 1–323 is histone deacetylase; it reads MGTALVYHED…VCMMVQTLLG (323 aa). His135 is a catalytic residue.

This sequence belongs to the histone deacetylase family. HD type 2 subfamily. As to quaternary structure, interacts with HDAC3. Interacts with HDAC2 and NCOR2/SMRT. Interacts with HSPA8/HSC70. Interacts with MSH2. Widely expressed.

The protein resides in the cytoplasm. It localises to the nucleus. The enzyme catalyses N(8)-acetylspermidine + H2O = spermidine + acetate. The catalysed reaction is N-acetylputrescine + H2O = putrescine + acetate. It carries out the reaction N-acetylcadaverine + H2O = cadaverine + acetate. It catalyses the reaction N(6)-acetyl-L-lysyl-[protein] + H2O = L-lysyl-[protein] + acetate. Functionally, polyamine deacetylase (PDAC), which acts preferentially on N(8)-acetylspermidine, and also on acetylcadaverine and acetylputrescine. Exhibits attenuated catalytic activity toward N(1),N(8)-diacetylspermidine and very low activity, if any, toward N(1)-acetylspermidine. Histone deacetylase activity has been observed in vitro. Has also been shown to be involved in MSH2 deacetylation. The physiological relevance of protein/histone deacetylase activity is unclear and could be very weak. May play a role in the promotion of late stages of autophagy, possibly autophagosome-lysosome fusion and/or lysosomal exocytosis in neuroblastoma cells. May play a role in homologous recombination. May promote DNA mismatch repair. This is Polyamine deacetylase HDAC10 (Hdac10) from Mus musculus (Mouse).